Reading from the N-terminus, the 490-residue chain is Probable glycine dehydrogenase (decarboxylating) subunit 2 (490 aa).

At K273 the chain carries N6-(pyridoxal phosphate)lysine.

This sequence belongs to the GcvP family. C-terminal subunit subfamily. As to quaternary structure, the glycine cleavage system is composed of four proteins: P, T, L and H. In this organism, the P 'protein' is a heterodimer of two subunits. It depends on pyridoxal 5'-phosphate as a cofactor.

The enzyme catalyses N(6)-[(R)-lipoyl]-L-lysyl-[glycine-cleavage complex H protein] + glycine + H(+) = N(6)-[(R)-S(8)-aminomethyldihydrolipoyl]-L-lysyl-[glycine-cleavage complex H protein] + CO2. The glycine cleavage system catalyzes the degradation of glycine. The P protein binds the alpha-amino group of glycine through its pyridoxal phosphate cofactor; CO(2) is released and the remaining methylamine moiety is then transferred to the lipoamide cofactor of the H protein. The polypeptide is Probable glycine dehydrogenase (decarboxylating) subunit 2 (Staphylococcus aureus (strain MRSA252)).